The sequence spans 147 residues: Leghemoglobin 6 (147 aa).

A Globin domain is found at 2–147; that stretch reads SFTDKQEALV…LATEIKKAMS (146 aa). Nitrated tyrosine occurs at positions 25 and 30. Ser45 provides a ligand contact to heme b. Position 45 is a phosphoserine (Ser45). Residue His62 coordinates O2. Heme b is bound by residues Lys65, His94, and Lys97. Tyr135 bears the Nitrated tyrosine mark.

It belongs to the plant globin family. As to quaternary structure, monomer. In terms of processing, nitrated in effective nodules and particularly in hypoxic conditions; this mechanism may play a protective role in the symbiosis by buffering toxic peroxynitrite NO(2)(-). Nitration level decrease during nodule senescence. Post-translationally, phosphorylation at Ser-45 disrupts the molecular environment of its porphyrin ring oxygen binding pocket, thus leading to a reduced oxygen consumption and to the delivery of oxygen O(2) to symbiosomes. Root nodules.

Its subcellular location is the cytoplasm. It is found in the cytosol. The protein localises to the nucleus. Functionally, leghemoglobin that reversibly binds oxygen O(2) through a pentacoordinated heme iron. In root nodules, facilitates the diffusion of oxygen to the bacteroids while preventing the bacterial nitrogenase from being inactivated by buffering dioxygen, nitric oxide and carbon monoxide, and promoting the formation of reactive oxygen species (ROS, e.g. H(2)O(2)). This role is essential for symbiotic nitrogen fixation (SNF). The chain is Leghemoglobin 6 from Medicago truncatula (Barrel medic).